A 178-amino-acid chain; its full sequence is ATP synthase subunit delta (178 aa).

The protein belongs to the ATPase delta chain family. F-type ATPases have 2 components, F(1) - the catalytic core - and F(0) - the membrane proton channel. F(1) has five subunits: alpha(3), beta(3), gamma(1), delta(1), epsilon(1). F(0) has three main subunits: a(1), b(2) and c(10-14). The alpha and beta chains form an alternating ring which encloses part of the gamma chain. F(1) is attached to F(0) by a central stalk formed by the gamma and epsilon chains, while a peripheral stalk is formed by the delta and b chains.

It is found in the cell inner membrane. Functionally, f(1)F(0) ATP synthase produces ATP from ADP in the presence of a proton or sodium gradient. F-type ATPases consist of two structural domains, F(1) containing the extramembraneous catalytic core and F(0) containing the membrane proton channel, linked together by a central stalk and a peripheral stalk. During catalysis, ATP synthesis in the catalytic domain of F(1) is coupled via a rotary mechanism of the central stalk subunits to proton translocation. Its function is as follows. This protein is part of the stalk that links CF(0) to CF(1). It either transmits conformational changes from CF(0) to CF(1) or is implicated in proton conduction. This chain is ATP synthase subunit delta, found in Chromohalobacter salexigens (strain ATCC BAA-138 / DSM 3043 / CIP 106854 / NCIMB 13768 / 1H11).